Here is a 151-residue protein sequence, read N- to C-terminus: Large ribosomal subunit protein bL9 (151 aa).

The protein belongs to the bacterial ribosomal protein bL9 family.

Functionally, binds to the 23S rRNA. The protein is Large ribosomal subunit protein bL9 of Francisella tularensis subsp. novicida (strain U112).